A 377-amino-acid polypeptide reads, in one-letter code: Ribosomal RNA large subunit methyltransferase G (377 aa).

Belongs to the methyltransferase superfamily. RlmG family.

It localises to the cytoplasm. It catalyses the reaction guanosine(1835) in 23S rRNA + S-adenosyl-L-methionine = N(2)-methylguanosine(1835) in 23S rRNA + S-adenosyl-L-homocysteine + H(+). In terms of biological role, specifically methylates the guanine in position 1835 (m2G1835) of 23S rRNA. This Shewanella oneidensis (strain ATCC 700550 / JCM 31522 / CIP 106686 / LMG 19005 / NCIMB 14063 / MR-1) protein is Ribosomal RNA large subunit methyltransferase G.